A 289-amino-acid polypeptide reads, in one-letter code: Cell division protein ZipA (289 aa).

Position 1 (M1) is a topological domain, periplasmic. Residues 2-22 (EIGLREWLIVIGIIVIAGILF) traverse the membrane as a helical segment. Residues 23–289 (DGWRRMRGSK…ERRALTQRRG (267 aa)) are Cytoplasmic-facing. Residues 48–141 (DEEETTSAEV…KPAQRITEDK (94 aa)) are disordered. Basic and acidic residues-rich tracts occupy residues 64–77 (LDTHKEPQLDEHDL), 85–106 (REGKRSNSDKRGNSDKKRKDEP), and 123–141 (GRDDDFPDDKPAQRITEDK).

Belongs to the ZipA family. Interacts with FtsZ via their C-terminal domains.

It localises to the cell inner membrane. Its function is as follows. Essential cell division protein that stabilizes the FtsZ protofilaments by cross-linking them and that serves as a cytoplasmic membrane anchor for the Z ring. Also required for the recruitment to the septal ring of downstream cell division proteins. The chain is Cell division protein ZipA from Pseudomonas savastanoi pv. phaseolicola (strain 1448A / Race 6) (Pseudomonas syringae pv. phaseolicola (strain 1448A / Race 6)).